A 104-amino-acid polypeptide reads, in one-letter code: MAAKIRRQDEVIVLAGKDQGKRGKVSQVLPTGKLIVEGLNLVKKHQKPNPQLGVAGGIVEQEAPIQASNVAIFNSATGKADRVGFRFEDGKKVRFFKSNSELVK.

It belongs to the universal ribosomal protein uL24 family. In terms of assembly, part of the 50S ribosomal subunit.

In terms of biological role, one of two assembly initiator proteins, it binds directly to the 5'-end of the 23S rRNA, where it nucleates assembly of the 50S subunit. Functionally, one of the proteins that surrounds the polypeptide exit tunnel on the outside of the subunit. The sequence is that of Large ribosomal subunit protein uL24 from Shewanella halifaxensis (strain HAW-EB4).